A 259-amino-acid polypeptide reads, in one-letter code: Ras-related protein Rab-34 (259 aa).

M1 carries the N-acetylmethionine modification. Residues S62, V63, G64, K65, T66, D78, Y81, and T84 each coordinate GTP. Mg(2+) is bound at residue T66. Positions 71-89 (RFCKDTFDKNYKATIGVDF) match the Switch 1 motif. Mg(2+) contacts are provided by T84 and D107. Positions 108–127 (TAGQERFKCIASTYYRGAQA) match the Switch 2 motif. Residues G110, K167, D169, and S198 each contribute to the GTP site. S241 is modified (phosphoserine). Residues C257 and C258 are each lipidated (S-geranylgeranyl cysteine).

The protein belongs to the small GTPase superfamily. Rab family. Interacts with RILP. The GTP-bound form interacts with REP15. Mg(2+) serves as cofactor.

The protein localises to the cytoplasm. It is found in the golgi apparatus. Its subcellular location is the cytoplasmic vesicle. It localises to the phagosome. The protein resides in the phagosome membrane. The protein localises to the cell projection. It is found in the cilium. Its subcellular location is the cytoskeleton. It localises to the microtubule organizing center. The protein resides in the centrosome. The protein localises to the centriole. The catalysed reaction is GTP + H2O = GDP + phosphate + H(+). Regulated by guanine nucleotide exchange factors (GEFs) which promote the exchange of bound GDP for free GTP. Regulated by GTPase activating proteins (GAPs) which increase the GTP hydrolysis activity. Inhibited by GDP dissociation inhibitors (GDIs). The small GTPases Rab are key regulators of intracellular membrane trafficking, from the formation of transport vesicles to their fusion with membranes. Rabs cycle between an inactive GDP-bound form and an active GTP-bound form that is able to recruit to membranes different sets of downstream effectors directly responsible for vesicle formation, movement, tethering and fusion. RAB34 transports protein involved in the redistribution of lysosomes to the peri-Golgi region. Plays a role in the maturation of phagosomes that engulf pathogens, such as S.aureus and M.tuberculosis. Plays a role in the fusion of phagosomes with lysosomes. Involved in ciliogenesis. In particular, it is required for early steps of the intracellular cilium assembly pathway initiated by trafficking and docking of ciliary vesicles to the centrioles in the cytoplasm, followed by axoneme formation in the cytoplasm. After axoneme elongation, the centrioles migrate close to the cell surface so that ciliary vesicles can fuse with the plasma membrane to expose cilia to the extracellular space. It seems dispensable for ciliogenesis via the extracellular pathway where cilium assembly begins after migration and docking of the centriole to the plasma membrane. Also acts as a positive regulator of hedgehog signaling and regulates ciliary function. This Rattus norvegicus (Rat) protein is Ras-related protein Rab-34.